We begin with the raw amino-acid sequence, 365 residues long: D-alanine--D-alanine ligase (365 aa).

An ATP-grasp domain is found at 135–345; the sequence is KLLLKSFNIP…YESLVDNLVS (211 aa). 168 to 223 is a binding site for ATP; the sequence is KQSLNYPVIVKPAMLGSSIGISIAYNDTQIEKCIEEAFEYDLTVVVEKFMKVREIE. Mg(2+) is bound by residues D298, E312, and N314.

The protein belongs to the D-alanine--D-alanine ligase family. Mg(2+) serves as cofactor. The cofactor is Mn(2+).

It is found in the cytoplasm. The enzyme catalyses 2 D-alanine + ATP = D-alanyl-D-alanine + ADP + phosphate + H(+). It functions in the pathway cell wall biogenesis; peptidoglycan biosynthesis. Its function is as follows. Cell wall formation. The protein is D-alanine--D-alanine ligase of Borrelia hermsii (strain HS1 / DAH).